The chain runs to 304 residues: UDP-N-acetylenolpyruvoylglucosamine reductase (304 aa).

The 166-residue stretch at 31–196 (KVGGPADYLA…ISAKFNLKPG (166 aa)) folds into the FAD-binding PCMH-type domain. The active site involves Arg175. The active-site Proton donor is the Ser225. Glu295 is an active-site residue.

Belongs to the MurB family. FAD is required as a cofactor.

It localises to the cytoplasm. The catalysed reaction is UDP-N-acetyl-alpha-D-muramate + NADP(+) = UDP-N-acetyl-3-O-(1-carboxyvinyl)-alpha-D-glucosamine + NADPH + H(+). It functions in the pathway cell wall biogenesis; peptidoglycan biosynthesis. Its function is as follows. Cell wall formation. This chain is UDP-N-acetylenolpyruvoylglucosamine reductase, found in Streptococcus thermophilus (strain ATCC BAA-491 / LMD-9).